Consider the following 280-residue polypeptide: Small ribosomal subunit protein uS15m (280 aa).

The protein belongs to the universal ribosomal protein uS15 family. In terms of assembly, component of the mitochondrial ribosome small subunit (28S) which comprises a 12S rRNA and about 30 distinct proteins. In terms of tissue distribution, expressed in anterior and posterior midgut primordia in stage 11 embryos. In stage 13 embryos, expression is high in the developing midgut and hindgut. In stage 16 embryos, expression is elevated in the midgut, hindgut, and in a small region that will give rise to pharyngeal muscles and to the stomatogastric nervous system. In larvae, expression is predominant in the gut, and head, presumably in pharyngeal muscles.

Its subcellular location is the mitochondrion. Its function is as follows. Essential for gut mitochondrial activity. Might be involved in tissue specific growth factor production. The chain is Small ribosomal subunit protein uS15m (bonsai) from Drosophila melanogaster (Fruit fly).